The sequence spans 346 residues: tRNA N6-adenosine threonylcarbamoyltransferase (346 aa).

The Fe cation site is built by His111 and His115. Substrate contacts are provided by residues 134–138 (LVSGG), Asp167, Gly180, Asp184, and Asn279. Residue Asp307 coordinates Fe cation.

This sequence belongs to the KAE1 / TsaD family. The cofactor is Fe(2+).

The protein localises to the cytoplasm. It carries out the reaction L-threonylcarbamoyladenylate + adenosine(37) in tRNA = N(6)-L-threonylcarbamoyladenosine(37) in tRNA + AMP + H(+). Functionally, required for the formation of a threonylcarbamoyl group on adenosine at position 37 (t(6)A37) in tRNAs that read codons beginning with adenine. Is involved in the transfer of the threonylcarbamoyl moiety of threonylcarbamoyl-AMP (TC-AMP) to the N6 group of A37, together with TsaE and TsaB. TsaD likely plays a direct catalytic role in this reaction. The chain is tRNA N6-adenosine threonylcarbamoyltransferase from Trichormus variabilis (strain ATCC 29413 / PCC 7937) (Anabaena variabilis).